A 609-amino-acid polypeptide reads, in one-letter code: UvrABC system protein C (609 aa).

The region spanning 15–92 (TGSGVYQMQD…IKQFRPRYNV (78 aa)) is the GIY-YIG domain. The UVR domain occupies 202 to 237 (DQVIIKLTERMEVASENLVFEEAAHYRDQIRQLRRL).

The protein belongs to the UvrC family. As to quaternary structure, interacts with UvrB in an incision complex.

Its subcellular location is the cytoplasm. The UvrABC repair system catalyzes the recognition and processing of DNA lesions. UvrC both incises the 5' and 3' sides of the lesion. The N-terminal half is responsible for the 3' incision and the C-terminal half is responsible for the 5' incision. The polypeptide is UvrABC system protein C (Coxiella burnetii (strain CbuG_Q212) (Coxiella burnetii (strain Q212))).